The primary structure comprises 119 residues: Probable cyclase otaY (119 aa).

Belongs to the aurE cyclase family.

It functions in the pathway mycotoxin biosynthesis. Probable cyclase; part of the gene cluster that mediates the biosynthesis of ochratoxin A (OTA), a mycotoxin composed of a chlorinated type I polyketide dihydroisocoumarin moiety linked to L-phenylalanine, and demonstrated to have nephrotoxic, immunotoxic, genotoxic, neurotoxic, and teratogenic properties. OtaY is probably involved in the polyketide cyclization. The pathway begins with the highly reducing polyketide synthase otaA that catalyzes the formation of the isocoumarin group during the initial stages of biosynthesis, starting from one acetate and 4 malonate units, to originate the characteristic pentaketide skeleton 7-methylmellein (7-MM) of the OTA molecule. The newly identified cyclase otaY might be involved in the polyketide cyclization reaction during the initial steps of the OTA biosynthesis. 7-MM is then oxidized into 7-carboxymellein (also called ochratoxin beta) by the cytochrome P450 monooxygenase otaC. The NRPS encoded by the otaB gene is involved in the linking of phenylalanine to the dihydroisocoumarin ring. The reaction catalyzed by NRPS results in the production of ochratoxin B (OTB), which is the non-chlorinated analog of OTA and which subsequently serves as the substrate of the halogenase otaD for chlorination activity to form the final molecular structure of OTA, containing a chlorine atom in the C-5 position of the molecule. The polypeptide is Probable cyclase otaY (Aspergillus niger (strain ATCC MYA-4892 / CBS 513.88 / FGSC A1513)).